Consider the following 36-residue polypeptide: Photosystem I reaction center subunit VIII (36 aa).

A helical transmembrane segment spans residues 10–30 (FVPLVGLVFSAIIMVLSFLYI).

This sequence belongs to the PsaI family.

Its subcellular location is the plastid. It localises to the chloroplast thylakoid membrane. Functionally, may help in the organization of the PsaL subunit. The sequence is that of Photosystem I reaction center subunit VIII from Welwitschia mirabilis (Tree tumbo).